The following is a 505-amino-acid chain: Deoxyguanosinetriphosphate triphosphohydrolase (505 aa).

An HD domain is found at Arg66–Cys273.

The protein belongs to the dGTPase family. Type 1 subfamily. Homotetramer. The cofactor is Mg(2+).

It carries out the reaction dGTP + H2O = 2'-deoxyguanosine + triphosphate + H(+). Functionally, dGTPase preferentially hydrolyzes dGTP over the other canonical NTPs. This is Deoxyguanosinetriphosphate triphosphohydrolase from Salmonella enteritidis PT4 (strain P125109).